A 350-amino-acid polypeptide reads, in one-letter code: S-adenosylmethionine:tRNA ribosyltransferase-isomerase (350 aa).

Belongs to the QueA family. As to quaternary structure, monomer.

It localises to the cytoplasm. The enzyme catalyses 7-aminomethyl-7-carbaguanosine(34) in tRNA + S-adenosyl-L-methionine = epoxyqueuosine(34) in tRNA + adenine + L-methionine + 2 H(+). The protein operates within tRNA modification; tRNA-queuosine biosynthesis. Functionally, transfers and isomerizes the ribose moiety from AdoMet to the 7-aminomethyl group of 7-deazaguanine (preQ1-tRNA) to give epoxyqueuosine (oQ-tRNA). The sequence is that of S-adenosylmethionine:tRNA ribosyltransferase-isomerase from Vibrio vulnificus (strain YJ016).